The following is a 327-amino-acid chain: MFDAAPIKKVSVVIPVYNEQESLPELIRRTTAACESLGKAWEILLIDDGSSDSSAELMVKASQEADSHIISILLNRNYGQHAAIMAGFSHVSGDLIITLDADLQNPPEEIPRLVAKADEGFDVVGTVRQNRQDSLFRKSASKIINLLIQRTTGKAMGDYGCMLRAYRRPIIDTMLRCHERSTFIPILANIFARRATEIPVHHAEREFGDSKYSFMRLINLMYDLVTCLTTTPLRLLSLLGSVIAIGGFSLSVLLIVLRLALGPQWAAEGVFMLFAVLFTFIGAQFIGMGLLGEYIGRIYNDVRARPRYFVQQVIYPESTPFTEESHQ.

Topologically, residues 1-235 are cytoplasmic; the sequence is MFDAAPIKKV…TCLTTTPLRL (235 aa). The helical transmembrane segment at 236-256 threads the bilayer; it reads LSLLGSVIAIGGFSLSVLLIV. Over 257-269 the chain is Periplasmic; that stretch reads LRLALGPQWAAEG. The helical transmembrane segment at 270–290 threads the bilayer; it reads VFMLFAVLFTFIGAQFIGMGL. Residues 291 to 327 lie on the Cytoplasmic side of the membrane; sequence LGEYIGRIYNDVRARPRYFVQQVIYPESTPFTEESHQ.

It belongs to the glycosyltransferase 2 family.

Its subcellular location is the cell inner membrane. It catalyses the reaction UDP-4-deoxy-4-formamido-beta-L-arabinose + di-trans,octa-cis-undecaprenyl phosphate = 4-deoxy-4-formamido-alpha-L-arabinopyranosyl di-trans,octa-cis-undecaprenyl phosphate + UDP. It functions in the pathway glycolipid biosynthesis; 4-amino-4-deoxy-alpha-L-arabinose undecaprenyl phosphate biosynthesis; 4-amino-4-deoxy-alpha-L-arabinose undecaprenyl phosphate from UDP-4-deoxy-4-formamido-beta-L-arabinose and undecaprenyl phosphate: step 1/2. Its pathway is bacterial outer membrane biogenesis; lipopolysaccharide biosynthesis. In terms of biological role, catalyzes the transfer of 4-deoxy-4-formamido-L-arabinose from UDP to undecaprenyl phosphate. The modified arabinose is attached to lipid A and is required for resistance to polymyxin and cationic antimicrobial peptides. This is Undecaprenyl-phosphate 4-deoxy-4-formamido-L-arabinose transferase from Salmonella dublin (strain CT_02021853).